A 239-amino-acid chain; its full sequence is MLTRKQQELLLFIHERMKESGVPPSFDEMKDALDLASKSGIHRLITALEERGFIRRLPNRARALEVIKLPEAYSPSIQPRRGFSPSVIEGSLGKPQPAAAPAPAKPVADNGNSVSVPVMGRIAAGVPISAIQNNTHDIVVPADMLGSGEHYALEVKGDSMIDAGIFDGDTVIIRNGSTASPGDIVVALVDDEEATLKRFRRKGASIALEAANPAYETRIFGPDRVKVQGKLVGLIRRYH.

Positions 26-46 form a DNA-binding region, H-T-H motif; it reads FDEMKDALDLASKSGIHRLIT. Residues 80–108 are disordered; sequence RRGFSPSVIEGSLGKPQPAAAPAPAKPVA. Residues Ser159 and Lys197 each act as for autocatalytic cleavage activity in the active site.

The protein belongs to the peptidase S24 family. In terms of assembly, homodimer.

It catalyses the reaction Hydrolysis of Ala-|-Gly bond in repressor LexA.. Represses a number of genes involved in the response to DNA damage (SOS response), including recA and lexA. In the presence of single-stranded DNA, RecA interacts with LexA causing an autocatalytic cleavage which disrupts the DNA-binding part of LexA, leading to derepression of the SOS regulon and eventually DNA repair. The sequence is that of LexA repressor from Rhizobium leguminosarum bv. trifolii (strain WSM2304).